A 174-amino-acid polypeptide reads, in one-letter code: Co-chaperone protein HscB (174 aa).

Positions 2-74 constitute a J domain; sequence NYFALFDLPR…LNRAIYFLCL (73 aa).

Belongs to the HscB family. In terms of assembly, interacts with HscA and stimulates its ATPase activity. Interacts with IscU.

Functionally, co-chaperone involved in the maturation of iron-sulfur cluster-containing proteins. Seems to help targeting proteins to be folded toward HscA. The sequence is that of Co-chaperone protein HscB from Buchnera aphidicola subsp. Acyrthosiphon pisum (strain 5A).